Here is a 168-residue protein sequence, read N- to C-terminus: Photosystem I assembly protein Ycf3 (168 aa).

TPR repeat units follow at residues 35-68, 72-105, and 120-153; these read AFTYYRDGMSAQSEGNYAEALQNYYEATRLEIDP, SYILYNIGLIHTSNGEHTKALEYYFRALERNPFL, and GEQAIRQGDSEIAEAWSDQAAEYWKQAISLTPGN.

This sequence belongs to the Ycf3 family.

The protein localises to the plastid. It localises to the chloroplast thylakoid membrane. Functionally, essential for the assembly of the photosystem I (PSI) complex. May act as a chaperone-like factor to guide the assembly of the PSI subunits. This chain is Photosystem I assembly protein Ycf3, found in Piper cenocladum (Ant piper).